The following is a 234-amino-acid chain: Putative methyltransferase-like protein 15P1 (234 aa).

Residues 100–102 (GGH), Asp119, Phe146, Asp169, and Gln176 each bind S-adenosyl-L-methionine.

The protein belongs to the methyltransferase superfamily. RsmH family.

Its function is as follows. Probable S-adenosyl-L-methionine-dependent methyltransferase. This chain is Putative methyltransferase-like protein 15P1 (METTL15P1), found in Homo sapiens (Human).